The primary structure comprises 204 residues: LexA repressor (204 aa).

The segment at residues 29–49 is a DNA-binding region (H-T-H motif); it reads VREICKGVGLSSTSSVHGHLS. Active-site for autocatalytic cleavage activity residues include S126 and K163.

The protein belongs to the peptidase S24 family. Homodimer.

The enzyme catalyses Hydrolysis of Ala-|-Gly bond in repressor LexA.. Represses a number of genes involved in the response to DNA damage (SOS response), including recA and lexA. In the presence of single-stranded DNA, RecA interacts with LexA causing an autocatalytic cleavage which disrupts the DNA-binding part of LexA, leading to derepression of the SOS regulon and eventually DNA repair. The sequence is that of LexA repressor from Clostridium novyi (strain NT).